We begin with the raw amino-acid sequence, 274 residues long: 2,3,4,5-tetrahydropyridine-2,6-dicarboxylate N-succinyltransferase (274 aa).

2 residues coordinate substrate: arginine 103 and aspartate 140.

Belongs to the transferase hexapeptide repeat family. As to quaternary structure, homotrimer.

It localises to the cytoplasm. The catalysed reaction is (S)-2,3,4,5-tetrahydrodipicolinate + succinyl-CoA + H2O = (S)-2-succinylamino-6-oxoheptanedioate + CoA. It functions in the pathway amino-acid biosynthesis; L-lysine biosynthesis via DAP pathway; LL-2,6-diaminopimelate from (S)-tetrahydrodipicolinate (succinylase route): step 1/3. In Actinobacillus pleuropneumoniae serotype 5b (strain L20), this protein is 2,3,4,5-tetrahydropyridine-2,6-dicarboxylate N-succinyltransferase.